The chain runs to 314 residues: Aspartate carbamoyltransferase catalytic subunit (314 aa).

Positions 58 and 59 each coordinate carbamoyl phosphate. Lys-86 provides a ligand contact to L-aspartate. 3 residues coordinate carbamoyl phosphate: Arg-108, His-136, and Gln-139. L-aspartate contacts are provided by Arg-169 and Arg-223. Carbamoyl phosphate is bound by residues Gly-264 and Pro-265.

This sequence belongs to the aspartate/ornithine carbamoyltransferase superfamily. ATCase family. As to quaternary structure, heterododecamer (2C3:3R2) of six catalytic PyrB chains organized as two trimers (C3), and six regulatory PyrI chains organized as three dimers (R2).

The enzyme catalyses carbamoyl phosphate + L-aspartate = N-carbamoyl-L-aspartate + phosphate + H(+). Its pathway is pyrimidine metabolism; UMP biosynthesis via de novo pathway; (S)-dihydroorotate from bicarbonate: step 2/3. Functionally, catalyzes the condensation of carbamoyl phosphate and aspartate to form carbamoyl aspartate and inorganic phosphate, the committed step in the de novo pyrimidine nucleotide biosynthesis pathway. The chain is Aspartate carbamoyltransferase catalytic subunit from Roseobacter denitrificans (strain ATCC 33942 / OCh 114) (Erythrobacter sp. (strain OCh 114)).